Consider the following 371-residue polypeptide: Queuine tRNA-ribosyltransferase (371 aa).

Asp-90 acts as the Proton acceptor in catalysis. Residues 90-94, Asp-144, Gln-188, and Gly-215 contribute to the substrate site; that span reads DSGGF. The segment at 246–252 is RNA binding; that stretch reads GVGTPED. The active-site Nucleophile is the Asp-265. The RNA binding; important for wobble base 34 recognition stretch occupies residues 270 to 274; that stretch reads TRNAR. Positions 303, 305, 308, and 334 each coordinate Zn(2+).

This sequence belongs to the queuine tRNA-ribosyltransferase family. As to quaternary structure, homodimer. Within each dimer, one monomer is responsible for RNA recognition and catalysis, while the other monomer binds to the replacement base PreQ1. The cofactor is Zn(2+).

It carries out the reaction 7-aminomethyl-7-carbaguanine + guanosine(34) in tRNA = 7-aminomethyl-7-carbaguanosine(34) in tRNA + guanine. It functions in the pathway tRNA modification; tRNA-queuosine biosynthesis. Functionally, catalyzes the base-exchange of a guanine (G) residue with the queuine precursor 7-aminomethyl-7-deazaguanine (PreQ1) at position 34 (anticodon wobble position) in tRNAs with GU(N) anticodons (tRNA-Asp, -Asn, -His and -Tyr). Catalysis occurs through a double-displacement mechanism. The nucleophile active site attacks the C1' of nucleotide 34 to detach the guanine base from the RNA, forming a covalent enzyme-RNA intermediate. The proton acceptor active site deprotonates the incoming PreQ1, allowing a nucleophilic attack on the C1' of the ribose to form the product. After dissociation, two additional enzymatic reactions on the tRNA convert PreQ1 to queuine (Q), resulting in the hypermodified nucleoside queuosine (7-(((4,5-cis-dihydroxy-2-cyclopenten-1-yl)amino)methyl)-7-deazaguanosine). The polypeptide is Queuine tRNA-ribosyltransferase (Neisseria meningitidis serogroup C / serotype 2a (strain ATCC 700532 / DSM 15464 / FAM18)).